The chain runs to 733 residues: Cell division cycle protein 48 homolog AF_1297 (733 aa).

ATP contacts are provided by residues 223-230 (GPPGTGKT) and 496-503 (GPPGTGKT).

It belongs to the AAA ATPase family. CDC48 subfamily.

The protein is Cell division cycle protein 48 homolog AF_1297 of Archaeoglobus fulgidus (strain ATCC 49558 / DSM 4304 / JCM 9628 / NBRC 100126 / VC-16).